The following is a 156-amino-acid chain: Small ribosomal subunit protein uS7 (156 aa).

Belongs to the universal ribosomal protein uS7 family. As to quaternary structure, part of the 30S ribosomal subunit. Contacts proteins S9 and S11.

Functionally, one of the primary rRNA binding proteins, it binds directly to 16S rRNA where it nucleates assembly of the head domain of the 30S subunit. Is located at the subunit interface close to the decoding center, probably blocks exit of the E-site tRNA. The protein is Small ribosomal subunit protein uS7 of Dehalococcoides mccartyi (strain ATCC BAA-2100 / JCM 16839 / KCTC 5957 / BAV1).